The sequence spans 57 residues: uncharacterized protein (57 aa).

The signal sequence occupies residues 1-24; that stretch reads MYDTWFVLTAVVLFVLVLIGNVHG.

Prismatic layer of shell (at protein level).

The protein resides in the secreted. This is an uncharacterized protein from Margaritifera margaritifera (Freshwater pearl mussel).